A 205-amino-acid polypeptide reads, in one-letter code: Recombination protein RecR (205 aa).

The C4-type zinc finger occupies 60-75; that stretch reads CKVCHNISDTETCRIC. The Toprim domain occupies 83–178; that stretch reads STICVVESIR…KLSVIARGIS (96 aa).

The protein belongs to the RecR family.

Its function is as follows. May play a role in DNA repair. It seems to be involved in an RecBC-independent recombinational process of DNA repair. It may act with RecF and RecO. This is Recombination protein RecR from Phocaeicola vulgatus (strain ATCC 8482 / DSM 1447 / JCM 5826 / CCUG 4940 / NBRC 14291 / NCTC 11154) (Bacteroides vulgatus).